We begin with the raw amino-acid sequence, 159 residues long: Trafficking protein particle complex subunit 6A (159 aa).

A Phosphoserine modification is found at Ser33.

This sequence belongs to the TRAPP small subunits family. BET3 subfamily. As to quaternary structure, part of the multisubunit transport protein particle (TRAPP) complex. Heterodimer with TRAPPC3. The heterodimer TRAPPC3-TRAPPC6A interacts with TRAPPC2L. Interacts with TRAPPC2L. In terms of tissue distribution, ubiquitous, with lowest expression in skeletal muscle and brain and highest in kidney, liver and testis, as well as in cultured melanocytes.

Its subcellular location is the golgi apparatus. The protein localises to the cis-Golgi network. It is found in the endoplasmic reticulum. Its function is as follows. May play a role in vesicular transport during the biogenesis of melanosomes. The protein is Trafficking protein particle complex subunit 6A of Mus musculus (Mouse).